Here is a 113-residue protein sequence, read N- to C-terminus: Ig heavy chain V-III region U61 (113 aa).

Positions 1-113 (EVKLEESGGG…YWGQGTLVPV (113 aa)) constitute an Ig-like domain. A disulfide bridge links cysteine 22 with cysteine 98.

The sequence is that of Ig heavy chain V-III region U61 from Mus musculus (Mouse).